The sequence spans 184 residues: Photosystem I assembly protein Ycf4 (184 aa).

The next 2 helical transmembrane spans lie at 19-39 (ISNF…LLVG) and 57-77 (IIFF…LFIS).

This sequence belongs to the Ycf4 family.

The protein localises to the plastid. It localises to the chloroplast thylakoid membrane. Functionally, seems to be required for the assembly of the photosystem I complex. This chain is Photosystem I assembly protein Ycf4, found in Cucumis sativus (Cucumber).